A 698-amino-acid polypeptide reads, in one-letter code: Cytoplasmic polyadenylation element-binding protein 3 (698 aa).

Positions 1 to 11 are enriched in basic and acidic residues; that stretch reads MQDDLLMDKSK. Disordered stretches follow at residues 1–114 and 158–208; these read MQDD…WSTG and AQTQ…SAAA. Over residues 13 to 28 the composition is skewed to low complexity; the sequence is QPQPQQQQRQQQQPQP. Positions 29-44 are enriched in polar residues; it reads ESSVSEAPSTPLSSET. A compositionally biased stretch (pro residues) spans 87-96; sequence PQQPPPPQEP. The span at 103–114 shows a compositional bias: polar residues; the sequence is LSPSFGSTWSTG. The segment covering 165 to 185 has biased composition (pro residues); it reads QPPPPAPAPQPAQPAQPPQAQ. The segment covering 186–208 has biased composition (low complexity); it reads PPQQRRSPASPSQAPYAQRSAAA. Phosphoserine is present on residues S192, S195, and S290. R308 carries the post-translational modification Asymmetric dimethylarginine. 2 RRM domains span residues 441 to 532 and 549 to 631; these read RKVF…PWNL and KTIF…PYVL.

This sequence belongs to the RRM CPEB family. Following synaptic activity, forms amyloid-like oligomers. Aggregation requires an intact actin cytoskeleton. Interacts with STAT5B; this inhibits STAT5B-mediated transcriptional activation. Interacts with E3 ubiquitin-protein ligase NEURL1; this leads to monoubiquitination and activation of CPEB3. Interacts with CAPN2; this leads to cleavage of CPEB3. Interacts (via C-terminal RNA-binding region) with TOB1; TOB1 also binds CNOT7/CAF1 and recruits it to CPEB3 to form a ternary complex. Interacts with SUMO-conjugating enzyme UBC9. Interacts with IPO5; the interaction is enhanced in a RAN-regulated manner following neuronal stimulation and mediates CPEB3 nuclear import. Interacts with exportin XPO1/CRM1. In terms of processing, activated by NEURL1-mediated monoubiquitination, resulting in the growth of new dendritic spines and increased levels of GRIA1 and GRIA2. NEURL1-mediated monoubiquitination facilitates synaptic plasticity and hippocampal-dependent memory storage. Under basal unstimulated conditions when CPEB3 is mainly unaggregated, sumoylated and acts as a translational repressor. Following neuronal stimulation, becomes desumoylated and aggregated which is required for the translation of mRNA targets and for dendritic filopodia formation. Post-translationally, following neuronal stimulation, cleaved by CAPN2 which abolishes its translational repressor activity, leading to translation of CPEB3 target mRNAs. In terms of processing, phosphorylation is enhanced by neuronal stimulation.

Its subcellular location is the cytoplasm. It localises to the nucleus. The protein localises to the synapse. It is found in the cell projection. The protein resides in the dendrite. Its subcellular location is the postsynaptic density. In terms of biological role, sequence-specific RNA-binding protein which acts as a translational repressor in the basal unstimulated state but, following neuronal stimulation, acts as a translational activator. In contrast to CPEB1, does not bind to the cytoplasmic polyadenylation element (CPE), a uridine-rich sequence element within the mRNA 3'-UTR, but binds to a U-rich loop within a stem-loop structure. Required for the consolidation and maintenance of hippocampal-based long term memory. In the basal state, binds to the mRNA 3'-UTR of the glutamate receptors GRIA2/GLUR2 mRNA and negatively regulates their translation. Also represses the translation of DLG4, GRIN1, GRIN2A and GRIN2B. When activated, acts as a translational activator of GRIA1 and GRIA2. In the basal state, suppresses SUMO2 translation but activates it following neuronal stimulation. Binds to the 3'-UTR of TRPV1 mRNA and represses TRPV1 translation which is required to maintain normal thermoception. Binds actin mRNA, leading to actin translational repression in the basal state and to translational activation following neuronal stimulation. Negatively regulates target mRNA levels by binding to TOB1 which recruits CNOT7/CAF1 to a ternary complex and this leads to target mRNA deadenylation and decay. In addition to its role in translation, binds to and inhibits the transcriptional activation activity of STAT5B without affecting its dimerization or DNA-binding activity. This, in turn, represses transcription of the STAT5B target gene EGFR which has been shown to play a role in enhancing learning and memory performance. In contrast to CPEB1, CPEB2 and CPEB4, not required for cell cycle progression. The protein is Cytoplasmic polyadenylation element-binding protein 3 (CPEB3) of Homo sapiens (Human).